The primary structure comprises 635 residues: Probable Xaa-Pro aminopeptidase P (635 aa).

Residues D432, D443, E541, and E555 each contribute to the Mn(2+) site.

The protein belongs to the peptidase M24B family. The cofactor is Mn(2+).

The enzyme catalyses Release of any N-terminal amino acid, including proline, that is linked to proline, even from a dipeptide or tripeptide.. Catalyzes the removal of a penultimate prolyl residue from the N-termini of peptides. The polypeptide is Probable Xaa-Pro aminopeptidase P (AMPP) (Arthroderma gypseum (strain ATCC MYA-4604 / CBS 118893) (Microsporum gypseum)).